The primary structure comprises 287 residues: Nucleotide-binding protein TGRD_433 (287 aa).

Residue 9-16 (GMSGAGKS) coordinates ATP. Position 60 to 63 (60 to 63 (DSRA)) interacts with GTP.

The protein belongs to the RapZ-like family.

Displays ATPase and GTPase activities. In Endomicrobium trichonymphae, this protein is Nucleotide-binding protein TGRD_433.